Consider the following 210-residue polypeptide: 3-hexulose-6-phosphate synthase (210 aa).

This sequence belongs to the HPS/KGPDC family. HPS subfamily.

It catalyses the reaction D-ribulose 5-phosphate + formaldehyde = D-arabino-hex-3-ulose 6-phosphate. The protein operates within one-carbon metabolism; formaldehyde assimilation via RuMP pathway; D-fructose 6-phosphate from D-ribulose 5-phosphate and formaldehyde: step 1/2. Catalyzes the condensation of ribulose 5-phosphate with formaldehyde to form 3-hexulose 6-phosphate. Together with HxlB, may act as a formaldehyde detoxification system. This chain is 3-hexulose-6-phosphate synthase (hxlA), found in Bacillus subtilis (strain 168).